Here is a 182-residue protein sequence, read N- to C-terminus: Isopentenyl-diphosphate Delta-isomerase (182 aa).

Mn(2+) contacts are provided by His25 and His32. The region spanning 30–164 (RLHLAFSSWL…PWAFSPWMVM (135 aa)) is the Nudix hydrolase domain. Residue Cys67 is part of the active site. His69 lines the Mn(2+) pocket. Glu87 provides a ligand contact to Mg(2+). Mn(2+)-binding residues include Glu114 and Glu116. Residue Glu116 is part of the active site.

It belongs to the IPP isomerase type 1 family. As to quaternary structure, homodimer. Mg(2+) serves as cofactor. The cofactor is Mn(2+).

The protein localises to the cytoplasm. The enzyme catalyses isopentenyl diphosphate = dimethylallyl diphosphate. Its pathway is isoprenoid biosynthesis; dimethylallyl diphosphate biosynthesis; dimethylallyl diphosphate from isopentenyl diphosphate: step 1/1. Its function is as follows. Catalyzes the 1,3-allylic rearrangement of the homoallylic substrate isopentenyl (IPP) to its highly electrophilic allylic isomer, dimethylallyl diphosphate (DMAPP). The sequence is that of Isopentenyl-diphosphate Delta-isomerase from Escherichia coli O139:H28 (strain E24377A / ETEC).